The sequence spans 744 residues: Prestin (744 aa).

Residues 1 to 75 (MDHAEENEIP…PITKWLPAYK (75 aa)) lie on the Cytoplasmic side of the membrane. Residues 76-104 (FKEYVLGDLVSGISTGVLQLPQGLAFAML) traverse the membrane as a helical segment. Topologically, residues 105–108 (AAVP) are extracellular. A helical membrane pass occupies residues 109–126 (PVFGLYSSFYPVIMYCFF). At 127–137 (GTSRHISIGPF) the chain is on the cytoplasmic side. A helical transmembrane segment spans residues 138–149 (AVISLMIGGVAV). The Extracellular portion of the chain corresponds to 150 to 168 (RLVPDDIVIPGGVNATNGT). An Involved in motor function motif is present at residues 158 to 168 (IPGGVNATNGT). 2 N-linked (GlcNAc...) asparagine glycosylation sites follow: asparagine 163 and asparagine 166. The chain crosses the membrane as a helical span at residues 169–196 (EARDALRVKVAMSVTLLSGIIQFCLGVC). Topologically, residues 197 to 206 (RFGFVAIYLT) are cytoplasmic. The helical transmembrane segment at 207–230 (EPLVRGFTTAAAVHVFTSMLKYLF) threads the bilayer. Over 231 to 241 (GVKTKRYSGIF) the chain is Extracellular. Residues 242-253 (SVVYSTVAVLQN) constitute an intramembrane region (helical). Residues 254 to 258 (VKNLN) lie on the Extracellular side of the membrane. The chain crosses the membrane as a helical span at residues 259-276 (VCSLGVGLMVFGLLLGGK). Residues 277–291 (EFNERFKEKLPAPIP) lie on the Cytoplasmic side of the membrane. Residues 292 to 307 (LEFFAVVMGTGISAGF) form a helical membrane-spanning segment. At 308 to 332 (NLHESYSVDVVGTLPLGLLPPANPD) the chain is on the extracellular side. Residues 333-359 (TSLFHLVYVDAIAIAIVGFSVTISMAK) form a helical membrane-spanning segment. The Cytoplasmic portion of the chain corresponds to 360–370 (TLANKHGYQVD). Residues 371–388 (GNQELIALGICNSIGSLF) form a helical membrane-spanning segment. Topologically, residues 389 to 396 (QTFSISCS) are extracellular. The chain crosses the membrane as a helical span at residues 397–406 (LSRSLVQEGT). Salicylate is bound at residue serine 398. The Cytoplasmic segment spans residues 407–410 (GGKT). The chain crosses the membrane as a helical span at residues 411-431 (QLAGCLASLMILLVILATGFL). At 432–436 (FESLP) the chain is on the extracellular side. The helical transmembrane segment at 437 to 464 (QAVLSAIVIVNLKGMFMQFSDLPFFWRT) threads the bilayer. A topological domain (cytoplasmic) is located at residue serine 465. The helical transmembrane segment at 466-481 (KIELTIWLTTFVSSLF) threads the bilayer. Residues 482–484 (LGL) are Extracellular-facing. A helical membrane pass occupies residues 485–504 (DYGLITAVIIALLTVIYRTQ). Residues 505–718 (SPSYTVLGQL…AVLGSQVREA (214 aa)) form an extended region for STAS domain region. The Cytoplasmic segment spans residues 505–744 (SPSYTVLGQL…PNATPTTPEA (240 aa)). Residues 525 to 713 (AYEEVKEIPG…HSIHDAVLGS (189 aa)) form the STAS domain. The tract at residues 720-744 (AEQETTVLPPQEDMEPNATPTTPEA) is disordered.

Belongs to the SLC26A/SulP transporter (TC 2.A.53) family. Homodimer. Interacts (via STAS domain) with CALM; this interaction is calcium-dependent and the STAS domain interacts with only one lobe of CALM which is an elongated conformation. Interacts with MYH1. As to expression, specifically expressed in outer hair cells of cochleae (at protein level). Not detected in other cells of the organ of Corti.

It is found in the lateral cell membrane. It carries out the reaction 2 hydrogencarbonate(in) + chloride(out) = 2 hydrogencarbonate(out) + chloride(in). With respect to regulation, salicylate, an inhibitor of outer hair cell motility, acts as a competitive antagonist at the prestin anion-binding site. Voltage-sensitive motor protein that drives outer hair cell (OHC) electromotility (eM) and participates in sound amplification in the hearing organ. Converts changes in the transmembrane electric potential into mechanical displacements resulting in the coupling of its expansion to movement of a charged voltage sensor across the lipid membrane. The nature of the voltage sensor is not completely clear, and two models compete. In the first model, acts as an incomplete transporter where intracellular chloride anion acts as extrinsic voltage sensor that drives conformational change in the protein which is sufficient to produce a length change in the plane of the membrane and hence in the length of the OHC. The second model in which multiple charged amino acid residues are distributed at the intracellular and extracellular membrane interfaces that form an intrinsic voltage sensor, whose movement produces the non-linear capacitance (NLC). However, the effective voltage sensor may be the result of a hybrid voltage sensor assembled from intrinsic charge (charged residues) and extrinsic charge (bound anion). Notably, binding of anions to the anion-binding pocket partially neutralizes the intrinsic positive charge rather than to form an electrically negative sensor, therefore remaining charge may serve as voltage sensor that, after depolarization, moves from down (expanded state) to up (contracted) conformation, which is accompanied by an eccentric contraction of the intermembrane cross-sectional area of the protein as well as a major increase in the hydrophobic thickness of the protein having as consequences the plasma membrane thickening and the cell contraction after membrane depolarization. The anion-binding pocket transits from the inward-open (Down) state, where it is exposed toward the intracellular solvent in the absence of anion, to the occluded (Up) state upon anion binding. Salicylate competes for the anion-binding site and inhibits the voltage-sensor movement, and therefore inhibits the charge transfer and electromotility by displacing Cl(-) from the anion-binding site and by preventing the structural transitions to the contracted state. In addition, can act as a weak Cl(-)/HCO3(-) antiporter across the cell membrane and so regulate the intracellular pH of the outer hair cells (OHCs), while firstly found as being unable to mediate electrogenic anion transport. Moreover, supports a role in cardiac mechanical amplification serving as an elastic element to enhance the actomyosin- based sarcomere contraction system. This is Prestin from Rattus norvegicus (Rat).